A 518-amino-acid polypeptide reads, in one-letter code: Trigger factor (518 aa).

Positions 170-255 (GDVVVIDFVG…VKGLESPQEA (86 aa)) constitute a PPIase FKBP-type domain. A disordered region spans residues 447 to 518 (EAPAKPAKKA…AKKAAAKKDA (72 aa)). 2 stretches are compositionally biased toward basic residues: residues 452–468 (PAKK…KKAA) and 501–518 (PAAK…KKDA).

Belongs to the FKBP-type PPIase family. Tig subfamily.

It is found in the cytoplasm. The enzyme catalyses [protein]-peptidylproline (omega=180) = [protein]-peptidylproline (omega=0). Functionally, involved in protein export. Acts as a chaperone by maintaining the newly synthesized protein in an open conformation. Functions as a peptidyl-prolyl cis-trans isomerase. The polypeptide is Trigger factor (Maricaulis maris (strain MCS10) (Caulobacter maris)).